Consider the following 318-residue polypeptide: C1GALT1-specific chaperone 1 (318 aa).

The Cytoplasmic portion of the chain corresponds to 1–6 (MLSESS). A helical; Signal-anchor for type II membrane protein transmembrane segment spans residues 7 to 26 (SFLKGVMLGSIFCALITMLG). At 27-318 (HIRIGHGNRM…FLPPNGSDND (292 aa)) the chain is on the lumenal side.

Belongs to the glycosyltransferase 31 family. Beta3-Gal-T subfamily. Associates with core 1 beta-3-galactosyltransferase (C1GALT1), probably not with the soluble active form. As to expression, ubiquitously expressed. Abundantly expressed in salivary gland, stomach, small intestine, kidney, and testis and at intermediate levels in whole brain, cerebellum, spinal cord, thymus, spleen, trachea, lung, pancreas, ovary, and uterus.

It localises to the membrane. Its function is as follows. Probable chaperone required for the generation of 1 O-glycan Gal-beta1-3GalNAc-alpha1-Ser/Thr (T antigen), which is a precursor for many extended O-glycans in glycoproteins. Probably acts as a specific molecular chaperone assisting the folding/stability of core 1 beta-3-galactosyltransferase (C1GALT1). The chain is C1GALT1-specific chaperone 1 (C1GALT1C1) from Homo sapiens (Human).